Consider the following 487-residue polypeptide: Homeobox protein homothorax (487 aa).

3 disordered regions span residues 25 to 49, 210 to 292, and 333 to 369; these read YDPHAGHRPPGLQGLPSHHSPHMTH, DTTK…SSLN, and NFGTSASGDASNASIGSGEGTGEEDDDASGKKNQKKR. The MEIS N-terminal domain maps to 127–211; sequence GGDVCSSESF…IDLVIDERDT (85 aa). Composition is skewed to polar residues over residues 227–237 and 333–345; these read NADSTSHTDGA and NFGTSASGDASNA. Residues 365-427 constitute a DNA-binding region (homeobox; TALE-type); that stretch reads NQKKRGIFPK…NARRRIVQPM (63 aa).

Belongs to the TALE/MEIS homeobox family. As to quaternary structure, interacts with exd; required for nuclear translocation of exd. In terms of tissue distribution, in the wing disk, the expression is present in the regions corresponding to notum, wing hinge and ventral pleura. In the leg disk, the expression is in the periphery region, corresponding to the proximal segments of the legs. In the antennal disk, the expression is in all but the arista region. In the eye disk, the expression is strong in the anterior region surrounding the eye field, including the regions corresponding to ptilinum, ocellus and head capsules, and weak in the posterior and lateral margins of the eye disk. Expressed specifically in maturating inner photoreceptors of the DRA and maintained through adulthood.

It localises to the nucleus. Its function is as follows. All isoforms are required for patterning of the embryonic cuticle. Acts with exd to delimit the eye field and prevent inappropriate eye development. Isoforms that carry the homeodomain are required for proper localization of chordotonal organs within the peripheral nervous system and antennal identity; required to activate antennal-specific genes, such as sal and to repress the leg-like expression of dac. Necessary for the nuclear localization of the essential HOX cofactor, extradenticle (exd). Both necessary and sufficient for inner photoreceptors to adopt the polarization-sensitive 'dorsal rim area' (DRA) of the eye fate instead of the color-sensitive default state. This occurs by increasing rhabdomere size and uncoupling R7-R8 communication to allow both cells to express the same opsin rather than different ones as required for color vision. This chain is Homeobox protein homothorax, found in Drosophila melanogaster (Fruit fly).